The following is a 261-amino-acid chain: Glucose 1-dehydrogenase (261 aa).

NADP(+) is bound at residue 11–35 (VITGSSTGLGKSMAIRFATEKAKVV). Residue S145 participates in substrate binding. Y158 serves as the catalytic Proton acceptor.

The protein belongs to the short-chain dehydrogenases/reductases (SDR) family. As to quaternary structure, homotetramer.

It carries out the reaction D-glucose + NAD(+) = D-glucono-1,5-lactone + NADH + H(+). It catalyses the reaction D-glucose + NADP(+) = D-glucono-1,5-lactone + NADPH + H(+). This is Glucose 1-dehydrogenase from Priestia megaterium (Bacillus megaterium).